A 102-amino-acid polypeptide reads, in one-letter code: Ribosomal silencing factor RsfS (102 aa).

Belongs to the Iojap/RsfS family. Interacts with ribosomal protein uL14 (rplN).

It is found in the cytoplasm. Functions as a ribosomal silencing factor. Interacts with ribosomal protein uL14 (rplN), blocking formation of intersubunit bridge B8. Prevents association of the 30S and 50S ribosomal subunits and the formation of functional ribosomes, thus repressing translation. This is Ribosomal silencing factor RsfS from Haemophilus influenzae (strain ATCC 51907 / DSM 11121 / KW20 / Rd).